A 431-amino-acid polypeptide reads, in one-letter code: uncharacterized protein (431 aa).

Disordered regions lie at residues Val-31–Val-55, Gln-257–Asp-291, and Phe-365–Ala-431. Over residues Val-42–Val-55 the composition is skewed to polar residues. The segment covering Val-412–Glu-425 has biased composition (basic and acidic residues).

This is an uncharacterized protein from Arabidopsis thaliana (Mouse-ear cress).